Reading from the N-terminus, the 979-residue chain is MKRNGESHLNGEAKKSRTEQNQEQQDYQDEYYSSSDEELLPSSQTSPVFDIAHSNSDKWQSTIRKVVNSVVSIQFSHVAAFDTETALVSEATGFVVDAERGLILTNRHVVGPGPFTGYVVFDNHESVDVKPIYRDPVHDFGFLQFDTKDVKYLKLTQLDLDPSLAKIGTEIRVVGNDNGEKLSILAGIISRIDRNAPDYGALTYNDFNTEYIQAAASATGGSSGSPVVNEDGKCVALQAGGSTEASTDFFLPVSRPKRALQCIQKGLPITRGDIQVEWQLKPFDECARLGFTAEAEAEARKMFPDKIGMLVAELVLPEGPADGLIKEGDTLISIQGEYISTFVRVDEILDENVGKELEFVFQRSGREIKQMIKIGNLHAITPDRFVHVAGASFNNLSYQVARCYCLPVRGLYVCDGSGSFEFSNQDTLGFIVETVDDKPVANLDEFVEVMKQLPDCSRVPVVYRHVSDMHAEYVQTIYIDRHWYTSFKLAVRNDTTGLWDFTTLQKEALPPAALVPQNAKYVDIPFSDPSRAECSKLVRSFVQVRTLCPSGVDSHPFKKDIGYGVVVDSTNGYVLVSRRYVPHYMCDIFVVFAESIDVAGEVVFLHPHLNYAIIKYDPKLVLADVQSPKFSETPLKRGDDLFFIGYNYNLRVVTDDVKVSSISSLNVTANSIAPRYRGTNLECILLDSKLTHECNTGVLVDNDGTLRAFWLSYLGESNELSFKMGLDVTDVLSILKSLQANHIPKSLRMLDAEFASLTVLQGRTRGVPQTWIKRFEDEAQDLIKFLSVDRVSAPTFEAKPSPLKVGDIVLSVNGKLVKNMRDFASMYDETSLTFNIIRQKQEMTLEVPTIDTTSMETSHVVSWSGALLQKPHYGVRQLMTKIPSEVYIVDKSSCGPAHQYGIVPISFITHVNDQETKDLDSFIQVVKLIPDKTYVKLRLVSFDNIPAAISLKTDYHYFPTTTLKRDAVSGKWNTEKINE.

The segment covering 1–20 (MKRNGESHLNGEAKKSRTEQ) has biased composition (basic and acidic residues). The disordered stretch occupies residues 1–43 (MKRNGESHLNGEAKKSRTEQNQEQQDYQDEYYSSSDEELLPSS). Over residues 21 to 34 (NQEQQDYQDEYYSS) the composition is skewed to low complexity. The tract at residues 65–260 (KVVNSVVSIQ…LPVSRPKRAL (196 aa)) is serine protease. Active-site charge relay system residues include H108, D139, and S222. PDZ domains follow at residues 277–362 (EWQL…FVFQ) and 871–943 (PHYG…VSFD).

The protein belongs to the peptidase S1C family.

The protein resides in the nucleus. In terms of biological role, nuclear serine protease which mediates apoptosis. This is Pro-apoptotic serine protease NMA111 (NMA111) from Lodderomyces elongisporus (strain ATCC 11503 / CBS 2605 / JCM 1781 / NBRC 1676 / NRRL YB-4239) (Yeast).